A 236-amino-acid chain; its full sequence is Ribosome maturation protein SDO1 homolog (236 aa).

Belongs to the SDO1/SBDS family.

This chain is Ribosome maturation protein SDO1 homolog, found in Pyrococcus horikoshii (strain ATCC 700860 / DSM 12428 / JCM 9974 / NBRC 100139 / OT-3).